We begin with the raw amino-acid sequence, 256 residues long: Thiazole synthase (256 aa).

The active-site Schiff-base intermediate with DXP is the lysine 98. 1-deoxy-D-xylulose 5-phosphate contacts are provided by residues glycine 159, 185–186, and 207–208; these read AG and NT.

This sequence belongs to the ThiG family. Homotetramer. Forms heterodimers with either ThiH or ThiS.

The protein localises to the cytoplasm. It catalyses the reaction [ThiS sulfur-carrier protein]-C-terminal-Gly-aminoethanethioate + 2-iminoacetate + 1-deoxy-D-xylulose 5-phosphate = [ThiS sulfur-carrier protein]-C-terminal Gly-Gly + 2-[(2R,5Z)-2-carboxy-4-methylthiazol-5(2H)-ylidene]ethyl phosphate + 2 H2O + H(+). It participates in cofactor biosynthesis; thiamine diphosphate biosynthesis. Its function is as follows. Catalyzes the rearrangement of 1-deoxy-D-xylulose 5-phosphate (DXP) to produce the thiazole phosphate moiety of thiamine. Sulfur is provided by the thiocarboxylate moiety of the carrier protein ThiS. In vitro, sulfur can be provided by H(2)S. This is Thiazole synthase from Aliivibrio fischeri (strain ATCC 700601 / ES114) (Vibrio fischeri).